A 361-amino-acid polypeptide reads, in one-letter code: Cobalt-precorrin-5B C(1)-methyltransferase (361 aa).

This sequence belongs to the CbiD family.

It carries out the reaction Co-precorrin-5B + S-adenosyl-L-methionine = Co-precorrin-6A + S-adenosyl-L-homocysteine. The protein operates within cofactor biosynthesis; adenosylcobalamin biosynthesis; cob(II)yrinate a,c-diamide from sirohydrochlorin (anaerobic route): step 6/10. In terms of biological role, catalyzes the methylation of C-1 in cobalt-precorrin-5B to form cobalt-precorrin-6A. The polypeptide is Cobalt-precorrin-5B C(1)-methyltransferase (Methylorubrum extorquens (strain CM4 / NCIMB 13688) (Methylobacterium extorquens)).